Reading from the N-terminus, the 495-residue chain is Protein SLENDER RICE1-LIKE 1 (495 aa).

The GRAS domain maps to 77–449 (EEEEVAGIRL…RPLFSASAWE (373 aa)). The interval 84–140 (IRLVHLLMSCAGAIEAGDHALASAQLADSHAALAAVSAASGIGRVAVHFTTALSRRL) is leucine repeat I (LRI). The tract at residues 158–223 (YHHFYEACPY…GGPPFLRITG (66 aa)) is VHIID. A VHIID motif is present at residues 189–193 (VHVID). The leucine repeat II (LRII) stretch occupies residues 237–269 (DVGLRLADLARSVRVRFSFRGVAANSLDEVRPW). Positions 279-371 (VAFNSVLQLH…EAYLQREICD (93 aa)) are PFYRE. Positions 287–291 (LHRLL) match the LXXLL motif motif. Residues 374–449 (CGEGAARRER…RPLFSASAWE (76 aa)) form an SAW region. Positions 451-495 (AGDGGGDNNNNSNSNVSGSSGSDSNNSGSSNGKSSGARDGSSVCL) are disordered. Low complexity predominate over residues 458–485 (NNNNSNSNVSGSSGSDSNNSGSSNGKSS).

The protein belongs to the GRAS family. As to expression, expressed in elongating internodes and flowers. Expressed in floral meristem, stamen primordia and tapetum in developing anthers. Expressed at low levels in roots, shoot apices and rachis.

The protein localises to the nucleus. Functionally, probable transcriptional regulator that acts as a repressor of the gibberellin (GA) signaling pathway. Its repressive activity is weaker than that of SLR1. Its overexpression prevents the GA signaling pathway and induces a dwarf phenotype. This chain is Protein SLENDER RICE1-LIKE 1, found in Oryza sativa subsp. japonica (Rice).